A 403-amino-acid chain; its full sequence is Alkaline protease 1 (403 aa).

The N-terminal stretch at Met1–Ala21 is a signal peptide. A propeptide spanning residues Pro22–Thr125 is cleaved from the precursor. One can recognise an Inhibitor I9 domain in the interval Lys36–Leu120. Residues Pro130–Ala403 enclose the Peptidase S8 domain. Catalysis depends on charge relay system residues Asp162 and His193. N-linked (GlcNAc...) asparagine glycans are attached at residues Asn253 and Asn307. The active-site Charge relay system is Ser349. A glycan (N-linked (GlcNAc...) asparagine) is linked at Asn367.

It belongs to the peptidase S8 family.

The protein resides in the secreted. It catalyses the reaction Hydrolysis of proteins with broad specificity, and of Bz-Arg-OEt &gt; Ac-Tyr-OEt. Does not hydrolyze peptide amides.. In terms of biological role, secreted alkaline protease that allows assimilation of proteinaceous substrates. Acts as a significant virulence factor in invasive aspergillosis. Involved in immune evasion from the human and mice complement systems during infection. Efficiently cleaves important components of the complement cascade such as such as C3, C4, C5, and C1q, as well as IgG, which leads to down-regulation of complement activation at the hyphal surface. The polypeptide is Alkaline protease 1 (alp1) (Aspergillus fumigatus (strain CBS 144.89 / FGSC A1163 / CEA10) (Neosartorya fumigata)).